The sequence spans 428 residues: Cholecystokinin receptor type A (428 aa).

At 1 to 41 the chain is on the extracellular side; the sequence is MEVADSLLGNGSDVPPPCELGLENETLVCLEQPRAAKEWQP. Residues N10 and N24 are each glycosylated (N-linked (GlcNAc...) asparagine). C18 and C29 are joined by a disulfide. The helical transmembrane segment at 42-67 threads the bilayer; sequence AVQILLYSLIFLLSVLGNTLVITVLI. Over 68 to 77 the chain is Cytoplasmic; it reads RNKRMRTVTN. Residues 78-104 traverse the membrane as a helical segment; it reads IFLLSLAVSDLMLCLFCMPFNLIPNLL. Residues 105–115 lie on the Extracellular side of the membrane; the sequence is KDFIFGSAVCK. The cysteines at positions 114 and 196 are disulfide-linked. Residues 116–137 form a helical membrane-spanning segment; sequence TTTYFMGTSVSVSTFNLVAISL. The Cytoplasmic portion of the chain corresponds to 138-157; the sequence is ERYGAICKPLQSRVWQTKSH. A helical transmembrane segment spans residues 158–178; the sequence is ALKVIATTWCLSFTIMTPYPI. The Extracellular portion of the chain corresponds to 179 to 210; sequence YSNLVPFTKTNNQTANMCRFLLPNDVMQQSWH. A glycan (N-linked (GlcNAc...) asparagine) is linked at N190. Residues 211–234 traverse the membrane as a helical segment; the sequence is TFLLLILFLIPGIVMMVAYGLISL. The Cytoplasmic segment spans residues 235 to 313; it reads ELYQGIKFDA…NLMAKKRVIR (79 aa). Residues 250 to 269 form a disordered region; the sequence is ARDRNPSTGSSGRYEDGDGC. The helical transmembrane segment at 314–334 threads the bilayer; the sequence is MLMVIVVLFFLCWMPIFSANA. Residues 335–349 are Extracellular-facing; it reads WRAYDTASAERRLSG. The helical transmembrane segment at 350 to 373 threads the bilayer; sequence TPISFILLLSYTSSCVNPIIYCFM. Topologically, residues 374 to 428 are cytoplasmic; that stretch reads NKRFRLGFLATFPCCPHPGPPGPRGEVGEEEEGRTTGASLSRYSYSHMSASAPGP. C387 is lipidated: S-palmitoyl cysteine. The tract at residues 393–428 is disordered; that stretch reads PPGPRGEVGEEEEGRTTGASLSRYSYSHMSASAPGP. Over residues 409–422 the composition is skewed to polar residues; it reads TGASLSRYSYSHMS.

The protein belongs to the G-protein coupled receptor 1 family.

The protein localises to the cell membrane. In terms of biological role, receptor for cholecystokinin. Mediates pancreatic growth and enzyme secretion, smooth muscle contraction of the gall bladder and stomach. Has a 1000-fold higher affinity for CCK rather than for gastrin. It modulates feeding and dopamine-induced behavior in the central and peripheral nervous system. This receptor mediates its action by association with G proteins that activate a phosphatidylinositol-calcium second messenger system. The chain is Cholecystokinin receptor type A (CCKAR) from Canis lupus familiaris (Dog).